Consider the following 847-residue polypeptide: Alanine--tRNA ligase (847 aa).

Residues histidine 554, histidine 558, cysteine 656, and histidine 660 each contribute to the Zn(2+) site.

This sequence belongs to the class-II aminoacyl-tRNA synthetase family. Zn(2+) serves as cofactor.

It is found in the cytoplasm. It catalyses the reaction tRNA(Ala) + L-alanine + ATP = L-alanyl-tRNA(Ala) + AMP + diphosphate. Catalyzes the attachment of alanine to tRNA(Ala) in a two-step reaction: alanine is first activated by ATP to form Ala-AMP and then transferred to the acceptor end of tRNA(Ala). Also edits incorrectly charged Ser-tRNA(Ala) and Gly-tRNA(Ala) via its editing domain. This Helicobacter pylori (strain Shi470) protein is Alanine--tRNA ligase.